Here is a 976-residue protein sequence, read N- to C-terminus: Probable alanine--tRNA ligase, chloroplastic/mitochondrial (976 aa).

The transit peptide at 1-54 (MPRPGFAHATAPALAHARARISPVARRRVVVMRTRVDGAAKSLVTQLRLALGST) directs the protein to the chloroplast and mitochondrion. Residues 71–95 (LGTATNDQSTGTRANPNAEGKDNSG) are disordered. The segment covering 73 to 85 (TATNDQSTGTRAN) has biased composition (polar residues).

Belongs to the class-II aminoacyl-tRNA synthetase family. In terms of assembly, monomer. Zn(2+) is required as a cofactor.

It localises to the plastid. The protein localises to the chloroplast. The protein resides in the mitochondrion. It carries out the reaction tRNA(Ala) + L-alanine + ATP = L-alanyl-tRNA(Ala) + AMP + diphosphate. Its function is as follows. Catalyzes the attachment of alanine to tRNA(Ala) in a two-step reaction: alanine is first activated by ATP to form Ala-AMP and then transferred to the acceptor end of tRNA(Ala). Also edits incorrectly charged tRNA(Ala) via its editing domain. The polypeptide is Probable alanine--tRNA ligase, chloroplastic/mitochondrial (Ostreococcus tauri).